The sequence spans 88 residues: ATP synthase subunit c 2 (88 aa).

A run of 2 helical transmembrane segments spans residues 4–24 (FSWVMITAGFGMAIGSLGTGI) and 53–73 (IGLAMIESLAIYVFVVAMIIL).

It belongs to the ATPase C chain family. F-type ATPases have 2 components, F(1) - the catalytic core - and F(0) - the membrane proton channel. F(1) has five subunits: alpha(3), beta(3), gamma(1), delta(1), epsilon(1). F(0) has three main subunits: a(1), b(2) and c(10-14). The alpha and beta chains form an alternating ring which encloses part of the gamma chain. F(1) is attached to F(0) by a central stalk formed by the gamma and epsilon chains, while a peripheral stalk is formed by the delta and b chains.

Its subcellular location is the cell inner membrane. Functionally, f(1)F(0) ATP synthase produces ATP from ADP in the presence of a proton or sodium gradient. F-type ATPases consist of two structural domains, F(1) containing the extramembraneous catalytic core and F(0) containing the membrane proton channel, linked together by a central stalk and a peripheral stalk. During catalysis, ATP synthesis in the catalytic domain of F(1) is coupled via a rotary mechanism of the central stalk subunits to proton translocation. Key component of the F(0) channel; it plays a direct role in translocation across the membrane. A homomeric c-ring of between 10-14 subunits forms the central stalk rotor element with the F(1) delta and epsilon subunits. This is ATP synthase subunit c 2 from Syntrophotalea carbinolica (strain DSM 2380 / NBRC 103641 / GraBd1) (Pelobacter carbinolicus).